A 412-amino-acid chain; its full sequence is Squamosa promoter-binding-like protein 2 (412 aa).

The disordered stretch occupies residues 1–81; that stretch reads MDWDAKMPSW…AAAAGKRARA (81 aa). The span at 18–31 shows a compositional bias: gly residues; that stretch reads PSGGGGGGGGGGGA. Low complexity-rich tracts occupy residues 48-57 and 67-81; these read VSAASAAPAA and SSSS…RARA. An SBP-type zinc finger spans residues 89-167; it reads VPACSVEGCA…DGHNKRRRKP (79 aa). Cysteine 92, cysteine 97, cysteine 115, histidine 118, cysteine 134, cysteine 137, histidine 141, and cysteine 153 together coordinate Zn(2+). The short motif at 150 to 166 is the Bipartite nuclear localization signal element; that stretch reads KRSCRKRLDGHNKRRRK.

Expressed in stems, leaf sheaths, and young panicles.

The protein resides in the nucleus. Functionally, trans-acting factor that binds specifically to the consensus nucleotide sequence 5'-TNCGTACAA-3'. May be involved in panicle development. This Oryza sativa subsp. japonica (Rice) protein is Squamosa promoter-binding-like protein 2 (SPL2).